A 378-amino-acid polypeptide reads, in one-letter code: tRNA-specific 2-thiouridylase MnmA (378 aa).

Residues 9 to 16 (GVSGGVDS) and Met-35 each bind ATP. An interaction with target base in tRNA region spans residues 94-96 (NPD). Cys-99 serves as the catalytic Nucleophile. Cys-99 and Cys-195 are oxidised to a cystine. Position 123 (Gly-123) interacts with ATP. Positions 145–147 (KDQ) are interaction with tRNA. Cys-195 serves as the catalytic Cysteine persulfide intermediate. The segment at 307 to 308 (RY) is interaction with tRNA.

The protein belongs to the MnmA/TRMU family.

It is found in the cytoplasm. The enzyme catalyses S-sulfanyl-L-cysteinyl-[protein] + uridine(34) in tRNA + AH2 + ATP = 2-thiouridine(34) in tRNA + L-cysteinyl-[protein] + A + AMP + diphosphate + H(+). Its function is as follows. Catalyzes the 2-thiolation of uridine at the wobble position (U34) of tRNA, leading to the formation of s(2)U34. This is tRNA-specific 2-thiouridylase MnmA from Xanthomonas euvesicatoria pv. vesicatoria (strain 85-10) (Xanthomonas campestris pv. vesicatoria).